The following is a 230-amino-acid chain: Large ribosomal subunit protein uL1 (230 aa).

The protein belongs to the universal ribosomal protein uL1 family. In terms of assembly, part of the 50S ribosomal subunit.

Its function is as follows. Binds directly to 23S rRNA. The L1 stalk is quite mobile in the ribosome, and is involved in E site tRNA release. In terms of biological role, protein L1 is also a translational repressor protein, it controls the translation of the L11 operon by binding to its mRNA. The chain is Large ribosomal subunit protein uL1 from Nitrobacter winogradskyi (strain ATCC 25391 / DSM 10237 / CIP 104748 / NCIMB 11846 / Nb-255).